The following is a 486-amino-acid chain: Membrane-bound lytic murein transglycosylase F (486 aa).

The first 26 residues, 1–26 (MFSPMALRPRCAKWLIVTGLFLMLGA), serve as a signal peptide directing secretion. The non-LT domain stretch occupies residues 27 to 267 (CVEKPSTLER…RLKDRYYGHV (241 aa)). Residues 268-486 (DVLGYVGAYT…TKPPEENPPL (219 aa)) are LT domain. Residue glutamate 314 is part of the active site. The disordered stretch occupies residues 464-486 (VAEGNLHVPGVNKTKPPEENPPL).

In the N-terminal section; belongs to the bacterial solute-binding protein 3 family. This sequence in the C-terminal section; belongs to the transglycosylase Slt family.

Its subcellular location is the cell outer membrane. The catalysed reaction is Exolytic cleavage of the (1-&gt;4)-beta-glycosidic linkage between N-acetylmuramic acid (MurNAc) and N-acetylglucosamine (GlcNAc) residues in peptidoglycan, from either the reducing or the non-reducing ends of the peptidoglycan chains, with concomitant formation of a 1,6-anhydrobond in the MurNAc residue.. In terms of biological role, murein-degrading enzyme that degrades murein glycan strands and insoluble, high-molecular weight murein sacculi, with the concomitant formation of a 1,6-anhydromuramoyl product. Lytic transglycosylases (LTs) play an integral role in the metabolism of the peptidoglycan (PG) sacculus. Their lytic action creates space within the PG sacculus to allow for its expansion as well as for the insertion of various structures such as secretion systems and flagella. This is Membrane-bound lytic murein transglycosylase F from Pseudomonas fluorescens (strain ATCC BAA-477 / NRRL B-23932 / Pf-5).